We begin with the raw amino-acid sequence, 364 residues long: Isopentenyl-diphosphate delta-isomerase (364 aa).

Residues 1–13 are compositionally biased toward basic and acidic residues; sequence MSSAQRKDDHVRL. The disordered stretch occupies residues 1–24; sequence MSSAQRKDDHVRLATEQQRAHSGR. 6 to 7 contacts substrate; sequence RK. FMN contacts are provided by residues 64-66, serine 94, and asparagine 123; that span reads AMT. 94 to 96 is a binding site for substrate; that stretch reads SMH. Glutamine 153 serves as a coordination point for substrate. Glutamate 154 serves as a coordination point for Mg(2+). Residues lysine 185, serine 210, threonine 215, 259-261, and 280-281 each bind FMN; these read GIR and SG.

The protein belongs to the IPP isomerase type 2 family. Homooctamer. Dimer of tetramers. FMN serves as cofactor. Requires NADPH as cofactor. The cofactor is Mg(2+).

The protein resides in the cytoplasm. It catalyses the reaction isopentenyl diphosphate = dimethylallyl diphosphate. In terms of biological role, involved in the biosynthesis of isoprenoids. Catalyzes the 1,3-allylic rearrangement of the homoallylic substrate isopentenyl (IPP) to its allylic isomer, dimethylallyl diphosphate (DMAPP). This Kitasatospora griseola (Streptomyces griseolosporeus) protein is Isopentenyl-diphosphate delta-isomerase.